We begin with the raw amino-acid sequence, 152 residues long: Large ribosomal subunit protein uL22 (152 aa).

This sequence belongs to the universal ribosomal protein uL22 family. As to quaternary structure, part of the 50S ribosomal subunit.

This protein binds specifically to 23S rRNA. It makes multiple contacts with different domains of the 23S rRNA in the assembled 50S subunit and ribosome. Functionally, the globular domain of the protein is located near the polypeptide exit tunnel on the outside of the subunit, while an extended beta-hairpin is found that lines the wall of the exit tunnel in the center of the 70S ribosome. The protein is Large ribosomal subunit protein uL22 of Methanothrix thermoacetophila (strain DSM 6194 / JCM 14653 / NBRC 101360 / PT) (Methanosaeta thermophila).